Consider the following 186-residue polypeptide: Pyridoxal 5'-phosphate synthase subunit PdxT (186 aa).

46–48 (GES) lines the L-glutamine pocket. The active-site Nucleophile is the C75. L-glutamine-binding positions include R101 and 128-129 (IR). Active-site charge relay system residues include H165 and E167.

Belongs to the glutaminase PdxT/SNO family. In terms of assembly, in the presence of PdxS, forms a dodecamer of heterodimers. Only shows activity in the heterodimer.

It catalyses the reaction aldehydo-D-ribose 5-phosphate + D-glyceraldehyde 3-phosphate + L-glutamine = pyridoxal 5'-phosphate + L-glutamate + phosphate + 3 H2O + H(+). It carries out the reaction L-glutamine + H2O = L-glutamate + NH4(+). Its pathway is cofactor biosynthesis; pyridoxal 5'-phosphate biosynthesis. In terms of biological role, catalyzes the hydrolysis of glutamine to glutamate and ammonia as part of the biosynthesis of pyridoxal 5'-phosphate. The resulting ammonia molecule is channeled to the active site of PdxS. This is Pyridoxal 5'-phosphate synthase subunit PdxT from Methanocaldococcus jannaschii (strain ATCC 43067 / DSM 2661 / JAL-1 / JCM 10045 / NBRC 100440) (Methanococcus jannaschii).